The chain runs to 209 residues: CASP-like protein 1B1 (209 aa).

Residues 1-10 (MDLERGDKKP) are compositionally biased toward basic and acidic residues. The segment at 1–39 (MDLERGDKKPPPPPPPAPRTAAATTTTTTTPACSGKKRP) is disordered. Topologically, residues 1 to 49 (MDLERGDKKPPPPPPPAPRTAAATTTTTTTPACSGKKRPPLRDSLVALQ) are cytoplasmic. Low complexity predominate over residues 19–32 (RTAAATTTTTTTPA). A helical membrane pass occupies residues 50 to 70 (PVLLRAAAALAAAAAAAVMAL). The Extracellular segment spans residues 71-100 (DAQSYTAVVAIVGTRPLTQTFTAKFSDTPA). The chain crosses the membrane as a helical span at residues 101–121 (FVYFVIANAIAAAYNLLVLLV). Topologically, residues 122–134 (RRRRRTTAGLVVR) are cytoplasmic. A helical membrane pass occupies residues 135 to 155 (MLDMVVMALLATGAAAAASMA). Residues 156-180 (ELGRNGNARARWNPVCDRFGSFCRR) lie on the Extracellular side of the membrane. Residues 181 to 201 (GGAALAASFVGVALMLALNLL) traverse the membrane as a helical segment. Over 202-209 (SAASGAGC) the chain is Cytoplasmic.

This sequence belongs to the Casparian strip membrane proteins (CASP) family. As to quaternary structure, homodimer and heterodimers.

It is found in the cell membrane. This is CASP-like protein 1B1 from Zea mays (Maize).